Here is an 830-residue protein sequence, read N- to C-terminus: Kinesin-like protein KIN-14B (830 aa).

The stretch at 56 to 97 forms a coiled coil; that stretch reads ENISDDNTESEAKVQKIQDELVSLNAQLKQITLQRREALNNY. One can recognise a Kinesin motor domain in the interval 103 to 425; it reads NIRVFCRIRP…LGFATRVRSI (323 aa). 182-189 serves as a coordination point for ATP; the sequence is GQTGSGKT. Residues 434–476 adopt a coiled-coil conformation; sequence EMKARKETLLIDLGQKVNDLEHECEDIRRKIKNLEESMEHLTG.

This sequence belongs to the TRAFAC class myosin-kinesin ATPase superfamily. Kinesin family. KIN-14 subfamily.

In Oryza sativa subsp. japonica (Rice), this protein is Kinesin-like protein KIN-14B.